The following is an 816-amino-acid chain: uncharacterized protein (816 aa).

503–534 (DTWTVITGGTDGIGKAYIEELCKTRGLKKFYL) contributes to the NADP(+) binding site. Residue Ser641 coordinates substrate. Residue Tyr661 is the Proton acceptor of the active site. 2 consecutive transmembrane segments (helical) span residues 743 to 763 (FGFS…SIVL) and 777 to 797 (VFII…FLLN).

This sequence belongs to the short-chain dehydrogenases/reductases (SDR) family.

The protein resides in the membrane. This is an uncharacterized protein from Caenorhabditis elegans.